A 213-amino-acid chain; its full sequence is Large ribosomal subunit protein uL1 (213 aa).

Belongs to the universal ribosomal protein uL1 family. As to quaternary structure, part of the 50S ribosomal subunit.

Binds directly to 23S rRNA. Probably involved in E site tRNA release. In terms of biological role, protein L1 is also a translational repressor protein, it controls the translation of its operon by binding to its mRNA. The chain is Large ribosomal subunit protein uL1 from Methanococcoides burtonii (strain DSM 6242 / NBRC 107633 / OCM 468 / ACE-M).